Reading from the N-terminus, the 157-residue chain is Cytochrome c-type biogenesis protein CcmE (157 aa).

Residues 1–8 (MHPVRKQR) lie on the Cytoplasmic side of the membrane. The helical; Signal-anchor for type II membrane protein transmembrane segment at 9 to 29 (LMTVLFIVIASSVAVGLMVFA) threads the bilayer. The Periplasmic segment spans residues 30–157 (LSKNLNLFYP…KTCEGLDYAS (128 aa)). Residues His-124 and Tyr-128 each contribute to the heme site.

Belongs to the CcmE/CycJ family.

Its subcellular location is the cell inner membrane. In terms of biological role, heme chaperone required for the biogenesis of c-type cytochromes. Transiently binds heme delivered by CcmC and transfers the heme to apo-cytochromes in a process facilitated by CcmF and CcmH. The chain is Cytochrome c-type biogenesis protein CcmE from Saccharophagus degradans (strain 2-40 / ATCC 43961 / DSM 17024).